Consider the following 416-residue polypeptide: Serine hydroxymethyltransferase (416 aa).

(6S)-5,6,7,8-tetrahydrofolate contacts are provided by residues L118 and 122-124 (GHL). N6-(pyridoxal phosphate)lysine is present on K226. (6S)-5,6,7,8-tetrahydrofolate contacts are provided by residues E242 and 350–352 (SPF).

This sequence belongs to the SHMT family. Homodimer. The cofactor is pyridoxal 5'-phosphate.

Its subcellular location is the cytoplasm. The catalysed reaction is (6R)-5,10-methylene-5,6,7,8-tetrahydrofolate + glycine + H2O = (6S)-5,6,7,8-tetrahydrofolate + L-serine. Its pathway is one-carbon metabolism; tetrahydrofolate interconversion. It participates in amino-acid biosynthesis; glycine biosynthesis; glycine from L-serine: step 1/1. Functionally, catalyzes the reversible interconversion of serine and glycine with tetrahydrofolate (THF) serving as the one-carbon carrier. This reaction serves as the major source of one-carbon groups required for the biosynthesis of purines, thymidylate, methionine, and other important biomolecules. Also exhibits THF-independent aldolase activity toward beta-hydroxyamino acids, producing glycine and aldehydes, via a retro-aldol mechanism. The polypeptide is Serine hydroxymethyltransferase (Helicobacter hepaticus (strain ATCC 51449 / 3B1)).